We begin with the raw amino-acid sequence, 424 residues long: Histidinol dehydrogenase (424 aa).

The NAD(+) site is built by Tyr-124, Gln-186, and Asn-209. Positions 232, 254, and 257 each coordinate substrate. Positions 254 and 257 each coordinate Zn(2+). Active-site proton acceptor residues include Glu-322 and His-323. Residues His-323, Asp-356, Glu-410, and His-415 each coordinate substrate. Zn(2+) is bound at residue Asp-356. His-415 is a binding site for Zn(2+).

This sequence belongs to the histidinol dehydrogenase family. Zn(2+) serves as cofactor.

The catalysed reaction is L-histidinol + 2 NAD(+) + H2O = L-histidine + 2 NADH + 3 H(+). Its pathway is amino-acid biosynthesis; L-histidine biosynthesis; L-histidine from 5-phospho-alpha-D-ribose 1-diphosphate: step 9/9. Its function is as follows. Catalyzes the sequential NAD-dependent oxidations of L-histidinol to L-histidinaldehyde and then to L-histidine. The chain is Histidinol dehydrogenase from Moorella thermoacetica (strain ATCC 39073 / JCM 9320).